The following is a 439-amino-acid chain: Homogentisate 1,2-dioxygenase (439 aa).

The Proton acceptor role is filled by His-293. 2 residues coordinate Fe cation: His-336 and Glu-342. 2 residues coordinate homogentisate: Tyr-351 and His-372. His-372 is a Fe cation binding site.

The protein belongs to the homogentisate dioxygenase family. In terms of assembly, hexamer; dimer of trimers. The cofactor is Fe cation.

It carries out the reaction homogentisate + O2 = 4-maleylacetoacetate + H(+). It functions in the pathway amino-acid degradation; L-phenylalanine degradation; acetoacetate and fumarate from L-phenylalanine: step 4/6. Involved in the catabolism of homogentisate (2,5-dihydroxyphenylacetate or 2,5-OH-PhAc), a central intermediate in the degradation of phenylalanine and tyrosine. Catalyzes the oxidative ring cleavage of the aromatic ring of homogentisate to yield maleylacetoacetate. In Cupriavidus necator (strain ATCC 17699 / DSM 428 / KCTC 22496 / NCIMB 10442 / H16 / Stanier 337) (Ralstonia eutropha), this protein is Homogentisate 1,2-dioxygenase.